We begin with the raw amino-acid sequence, 378 residues long: Chorismate synthase (378 aa).

The disordered stretch occupies residues 37 to 60 (EEEIQKDLTRRRPGQNDLTTPRDE). Residue Arg47 participates in NADP(+) binding. Residues 124-126 (RSS), Gly289, 304-308 (KPTST), and Arg330 each bind FMN.

The protein belongs to the chorismate synthase family. As to quaternary structure, homotetramer. It depends on FMNH2 as a cofactor.

The catalysed reaction is 5-O-(1-carboxyvinyl)-3-phosphoshikimate = chorismate + phosphate. It participates in metabolic intermediate biosynthesis; chorismate biosynthesis; chorismate from D-erythrose 4-phosphate and phosphoenolpyruvate: step 7/7. Its function is as follows. Catalyzes the anti-1,4-elimination of the C-3 phosphate and the C-6 proR hydrogen from 5-enolpyruvylshikimate-3-phosphate (EPSP) to yield chorismate, which is the branch point compound that serves as the starting substrate for the three terminal pathways of aromatic amino acid biosynthesis. This reaction introduces a second double bond into the aromatic ring system. This is Chorismate synthase from Leptospira biflexa serovar Patoc (strain Patoc 1 / Ames).